The following is a 238-amino-acid chain: Ribonuclease PH (238 aa).

Phosphate is bound by residues arginine 86 and 124-126 (GTR).

Belongs to the RNase PH family. In terms of assembly, homohexameric ring arranged as a trimer of dimers.

It carries out the reaction tRNA(n+1) + phosphate = tRNA(n) + a ribonucleoside 5'-diphosphate. Functionally, phosphorolytic 3'-5' exoribonuclease that plays an important role in tRNA 3'-end maturation. Removes nucleotide residues following the 3'-CCA terminus of tRNAs; can also add nucleotides to the ends of RNA molecules by using nucleoside diphosphates as substrates, but this may not be physiologically important. Probably plays a role in initiation of 16S rRNA degradation (leading to ribosome degradation) during starvation. The chain is Ribonuclease PH from Yersinia enterocolitica serotype O:8 / biotype 1B (strain NCTC 13174 / 8081).